A 638-amino-acid polypeptide reads, in one-letter code: MLLAQINRDSQGMTEFPGGGMEAQHVTLCLTEAVTVADGDNLENMEGVSLQAVTLADGSTAYIQHNSKDGRLIDGQVIQLEDGSAAYVQHVPIPKSTGDSLRLEDGQAVQLEDGTTAFIHHTSKDSYDQSSLQAVQLEDGTTAYIHHAVQVPQSDTILAIQADGTVAGLHTGDATIDPDTISALEQYAAKVSIDGSDGVTSTGMIGENEQEKKMQIVLQGHATRVTPKSQQSGEKAFRCKYDGCGKLYTTAHHLKVHERSHTGDRPYQCEHSGCGKAFATGYGLKSHFRTHTGEKPYRCSEDNCTKSFKTSGDLQKHIRTHTGERPFKCPIEGCGRSFTTSNIRKVHIRTHTGERPYYCTEPGCGRAFASATNYKNHVRIHTGEKPYVCTVPGCDKRFTEYSSLYKHHVVHTHSKPYNCNHCGKTYKQISTLAMHKRTAHNDTEPIEEEQEAFFEPPPGQGDDVLKGSQITYVTGVDGEDIVSTQVATVTQSGLSQQVTLISQDGTQHVNISQADMQAIGNTITMVTQDGTPITVPTHDAVISSAGTHSVAMVTAEGTEGQQVAIVAQDLAAFHTASSEMGHQQHSHHLVTTETRPLTLVATSNGTQIAVQLGEQPSLEEAIRIASRIQQGETPGLDD.

N-acetylmethionine is present on M1. K213 is covalently cross-linked (Glycyl lysine isopeptide (Lys-Gly) (interchain with G-Cter in SUMO2)). 4 consecutive C2H2-type zinc fingers follow at residues 237-261 (FRCKYDGCGKLYTTAHHLKVHERSH), 267-291 (YQCEHSGCGKAFATGYGLKSHFRTH), 297-321 (YRCSEDNCTKSFKTSGDLQKHIRTH), and 327-351 (FKCPIEGCGRSFTTSNIRKVHIRTH). Phosphothreonine is present on T352. 3 C2H2-type zinc fingers span residues 357–381 (YYCTEPGCGRAFASATNYKNHVRIH), 387–411 (YVCTVPGCDKRFTEYSSLYKHHVVH), and 417–440 (YNCNHCGKTYKQISTLAMHKRTAH). Residue K406 forms a Glycyl lysine isopeptide (Lys-Gly) (interchain with G-Cter in SUMO2) linkage.

Belongs to the GLI C2H2-type zinc-finger protein family. Interacts with CHD8. Forms a complex with HCFC1 and ZNF143.

The protein resides in the nucleus. In terms of biological role, transcriptional activator. Activates the gene for selenocysteine tRNA (tRNAsec). Binds to the SPH motif of small nuclear RNA (snRNA) gene promoters. Participates in efficient U6 RNA polymerase III transcription via its interaction with CHD8. In complex with HCFC1 and ZNF143, regulates the expression of several genes, including AP2S1, ESCO2, OPHN1, RBL1, UBXN8 and ZNF32. The chain is Zinc finger protein 143 (Znf143) from Mus musculus (Mouse).